The following is a 481-amino-acid chain: tRNA pseudouridine(38/39) synthase (481 aa).

Residue A2 is modified to N-acetylalanine. Catalysis depends on D119, which acts as the Nucleophile. Y196 lines the substrate pocket.

This sequence belongs to the tRNA pseudouridine synthase TruA family.

The protein localises to the nucleus. The catalysed reaction is uridine(38/39) in tRNA = pseudouridine(38/39) in tRNA. Its function is as follows. Formation of pseudouridine at position 39 in the anticodon stem and loop of transfer RNAs. Also acts on position 38, but much less efficiently. This Mus musculus (Mouse) protein is tRNA pseudouridine(38/39) synthase (Pus3).